We begin with the raw amino-acid sequence, 243 residues long: 23S rRNA (guanosine-2'-O-)-methyltransferase RlmB (243 aa).

3 residues coordinate S-adenosyl-L-methionine: glycine 196, isoleucine 216, and leucine 225.

This sequence belongs to the class IV-like SAM-binding methyltransferase superfamily. RNA methyltransferase TrmH family. RlmB subfamily. In terms of assembly, homodimer.

It localises to the cytoplasm. It carries out the reaction guanosine(2251) in 23S rRNA + S-adenosyl-L-methionine = 2'-O-methylguanosine(2251) in 23S rRNA + S-adenosyl-L-homocysteine + H(+). Functionally, specifically methylates the ribose of guanosine 2251 in 23S rRNA. The protein is 23S rRNA (guanosine-2'-O-)-methyltransferase RlmB of Shigella flexneri.